A 94-amino-acid chain; its full sequence is Co-chaperonin GroES (94 aa).

Belongs to the GroES chaperonin family. In terms of assembly, heptamer of 7 subunits arranged in a ring. Interacts with the chaperonin GroEL.

It localises to the cytoplasm. Functionally, together with the chaperonin GroEL, plays an essential role in assisting protein folding. The GroEL-GroES system forms a nano-cage that allows encapsulation of the non-native substrate proteins and provides a physical environment optimized to promote and accelerate protein folding. GroES binds to the apical surface of the GroEL ring, thereby capping the opening of the GroEL channel. The chain is Co-chaperonin GroES from Orientia tsutsugamushi (Rickettsia tsutsugamushi).